The chain runs to 145 residues: Immunity protein CdiI (145 aa).

In terms of assembly, interacts with cognate toxin fragment CdiA-CT.

Functionally, immunity protein component of a toxin-immunity protein module, which functions as a cellular contact-dependent growth inhibition (CDI) system. CDI modules allow bacteria to communicate with and inhibit the growth of closely related neighboring bacteria in a contact-dependent fashion. Protects cells against the 16S rRNase activity of CdiA-CT, its cognate toxin protein, but not against the toxic effects of a similar rRNase, non-cognate CdiA-CT from E.chrysanthemi strain EC16. The protein is Immunity protein CdiI of Enterobacter cloacae subsp. cloacae (strain ATCC 13047 / DSM 30054 / NBRC 13535 / NCTC 10005 / WDCM 00083 / NCDC 279-56).